A 127-amino-acid chain; its full sequence is Serum amyloid A protein (127 aa).

The N-terminal stretch at 1–18 (MRLCICFVLLAVIVCASA) is a signal peptide. Residues 88 to 127 (QGGVSGRGAEDTRADQEANAWGRNGGDPNRYRPPGLPSKY) are disordered.

Belongs to the SAA family. In terms of processing, this protein is the precursor of amyloid protein A, which is formed by the removal of approximately 3 residues from the C-terminal end. As to expression, expressed by the liver; secreted in plasma. Also present in the liver and lung irrespective of induction.

It is found in the secreted. Its function is as follows. Major acute phase reactant. Apolipoprotein of the HDL complex. The chain is Serum amyloid A protein from Anas platyrhynchos (Mallard).